A 514-amino-acid chain; its full sequence is 1,25-dihydroxyvitamin D(3) 24-hydroxylase, mitochondrial (514 aa).

The N-terminal 35 residues, 1–35, are a transit peptide targeting the mitochondrion; that stretch reads MSCPIDKRRPLIAFLRRLRDLGQPPRSVTSKAHVK. Cys462 serves as a coordination point for heme.

This sequence belongs to the cytochrome P450 family. Requires heme as cofactor.

The protein localises to the mitochondrion. It catalyses the reaction calcitriol + 2 reduced [adrenodoxin] + O2 + 2 H(+) = calcitetrol + 2 oxidized [adrenodoxin] + H2O. The catalysed reaction is calcitetrol + 2 reduced [adrenodoxin] + O2 + 2 H(+) = (1S)-1,25-dihydroxy-24-oxocalciol + 2 oxidized [adrenodoxin] + 2 H2O. It carries out the reaction (1S)-1,25-dihydroxy-24-oxocalciol + 2 reduced [adrenodoxin] + O2 + 2 H(+) = (1S)-1,23,25-trihydroxy-24-oxocalciol + 2 oxidized [adrenodoxin] + H2O. The enzyme catalyses (1S)-1,23-dihydroxy-24,25,26,27-tetranorcalciol + 2 reduced [adrenodoxin] + O2 + 2 H(+) = (1S)-1-hydroxy-23-oxo-24,25,26,27-tetranorcalciol + 2 oxidized [adrenodoxin] + 2 H2O. It catalyses the reaction (1S)-1-hydroxy-23-oxo-24,25,26,27-tetranorcalciol + 2 reduced [adrenodoxin] + O2 + H(+) = calcitroate + 2 oxidized [adrenodoxin] + H2O. The catalysed reaction is calcidiol + 2 reduced [adrenodoxin] + O2 + 2 H(+) = secalciferol + 2 oxidized [adrenodoxin] + H2O. It carries out the reaction secalciferol + 2 reduced [adrenodoxin] + O2 + 2 H(+) = 25-hydroxy-24-oxocalciol + 2 oxidized [adrenodoxin] + 2 H2O. The enzyme catalyses 25-hydroxy-24-oxocalciol + 2 reduced [adrenodoxin] + O2 + 2 H(+) = 23S,25-dihydroxy-24-oxocholecalciferol + 2 oxidized [adrenodoxin] + H2O. It catalyses the reaction 20S,23-dihydroxycholecalciferol + 2 reduced [adrenodoxin] + O2 + 2 H(+) = 20S,23,25-trihydroxycholecalciferol + 2 oxidized [adrenodoxin] + H2O. The catalysed reaction is 20S,23-dihydroxycholecalciferol + 2 reduced [adrenodoxin] + O2 + 2 H(+) = 20S,23,24-trihydroxycholecalciferol + 2 oxidized [adrenodoxin] + H2O. It carries out the reaction 20S-hydroxycholecalciferol + 2 reduced [adrenodoxin] + O2 + 2 H(+) = 20S,25-dihydroxycholecalciferol + 2 oxidized [adrenodoxin] + H2O. The enzyme catalyses 20S-hydroxycholecalciferol + 2 reduced [adrenodoxin] + O2 + 2 H(+) = 20S,24S-dihydroxycholecalciferol + 2 oxidized [adrenodoxin] + H2O. It catalyses the reaction 20S-hydroxycholecalciferol + 2 reduced [adrenodoxin] + O2 + 2 H(+) = 20S,24R-dihydroxycholecalciferol + 2 oxidized [adrenodoxin] + H2O. Its function is as follows. A cytochrome P450 monooxygenase with a key role in vitamin D catabolism and calcium homeostasis. Via C24-oxidation pathway, catalyzes the inactivation of both the vitamin D precursor calcidiol (25-hydroxyvitamin D(3)) and the active hormone calcitriol (1-alpha,25-dihydroxyvitamin D(3)). With initial hydroxylation at C-24 (via C24-oxidation pathway), performs a sequential 6-step oxidation of calcitriol leading to the formation of the biliary metabolite calcitroic acid. Hydroxylates at C-24 or C-25 other vitamin D active metabolites, such as CYP11A1-derived secosteroids 20S-hydroxycholecalciferol and 20S,23-dihydroxycholecalciferol. Mechanistically, uses molecular oxygen inserting one oxygen atom into a substrate, and reducing the second into a water molecule, with two electrons provided by NADPH via FDXR/adrenodoxin reductase and FDX1/adrenodoxin. The polypeptide is 1,25-dihydroxyvitamin D(3) 24-hydroxylase, mitochondrial (Mus musculus (Mouse)).